A 938-amino-acid chain; its full sequence is Bifunctional glutamine synthetase adenylyltransferase/adenylyl-removing enzyme (938 aa).

The interval 1-457 (MLEADAARLK…HFDHVFGDPS (457 aa)) is adenylyl removase. Residues 460–938 (AHTLDSMWAA…ALWTIVFGSA (479 aa)) are adenylyl transferase.

The protein belongs to the GlnE family. Mg(2+) is required as a cofactor.

It carries out the reaction [glutamine synthetase]-O(4)-(5'-adenylyl)-L-tyrosine + phosphate = [glutamine synthetase]-L-tyrosine + ADP. The enzyme catalyses [glutamine synthetase]-L-tyrosine + ATP = [glutamine synthetase]-O(4)-(5'-adenylyl)-L-tyrosine + diphosphate. Involved in the regulation of glutamine synthetase GlnA, a key enzyme in the process to assimilate ammonia. When cellular nitrogen levels are high, the C-terminal adenylyl transferase (AT) inactivates GlnA by covalent transfer of an adenylyl group from ATP to specific tyrosine residue of GlnA, thus reducing its activity. Conversely, when nitrogen levels are low, the N-terminal adenylyl removase (AR) activates GlnA by removing the adenylyl group by phosphorolysis, increasing its activity. The regulatory region of GlnE binds the signal transduction protein PII (GlnB) which indicates the nitrogen status of the cell. This Aromatoleum aromaticum (strain DSM 19018 / LMG 30748 / EbN1) (Azoarcus sp. (strain EbN1)) protein is Bifunctional glutamine synthetase adenylyltransferase/adenylyl-removing enzyme.